The sequence spans 256 residues: Protein YIPF5 (256 aa).

At 1–125 the chain is on the cytoplasmic side; it reads MSNFDNFNTD…ADGNIMNETD (125 aa). The chain crosses the membrane as a helical span at residues 126 to 146; that stretch reads LAGPMVFCLAFGATLLLAGKI. A topological domain (lumenal) is located at residue Gln147. A helical membrane pass occupies residues 148–168; it reads FGYVYGISAIGCLGMYCLLNL. The Cytoplasmic segment spans residues 169 to 172; sequence MSMT. A helical membrane pass occupies residues 173 to 193; the sequence is GVSFGCVSSVLGYCLLPMIIL. Residues 194 to 195 are Lumenal-facing; the sequence is SS. A helical membrane pass occupies residues 196–216; the sequence is FAVIFSLQGILGIVLAALIIG. Topologically, residues 217–235 are cytoplasmic; that stretch reads WCSFSASKIFISALAMDGQ. The chain crosses the membrane as a helical span at residues 236–256; sequence QVLVAYPCALLYGVFALISVF.

Belongs to the YIP1 family.

It is found in the endoplasmic reticulum membrane. It localises to the golgi apparatus. The protein localises to the cis-Golgi network membrane. In terms of biological role, plays a role in transport between endoplasmic reticulum and Golgi. The sequence is that of Protein YIPF5 (yipf5) from Xenopus tropicalis (Western clawed frog).